The chain runs to 185 residues: Der GTPase-activating protein YihI (185 aa).

Disordered regions lie at residues 1-74 and 145-169; these read MGRS…KKKI and EPED…SSDE. Over residues 23 to 33 the composition is skewed to basic and acidic residues; the sequence is NRSESDVEGRE. The segment covering 34-47 has biased composition (basic residues); that stretch reads RKRVKKRKGLKSGS. Over residues 48-68 the composition is skewed to basic and acidic residues; the sequence is RHSDGSEAKQRKAALARDPRL. Residues 145–155 are compositionally biased toward acidic residues; it reads EPEDDEEEIFE.

The protein belongs to the YihI family. In terms of assembly, interacts with Der.

Functionally, a GTPase-activating protein (GAP) that modifies Der/EngA GTPase function. May play a role in ribosome biogenesis. The sequence is that of Der GTPase-activating protein YihI from Vibrio atlanticus (strain LGP32) (Vibrio splendidus (strain Mel32)).